Reading from the N-terminus, the 56-residue chain is Large ribosomal subunit protein bL32 (56 aa).

It belongs to the bacterial ribosomal protein bL32 family.

This is Large ribosomal subunit protein bL32 from Prochlorococcus marinus (strain MIT 9301).